We begin with the raw amino-acid sequence, 269 residues long: Acyl-CoA-binding domain-containing protein 4 (269 aa).

Positions 12-101 (CQKQFQAAVS…MKLVAQKVID (90 aa)) constitute an ACB domain. An acyl-CoA contacts are provided by residues 23 to 32 (IQNLPKNGSY), 43 to 47 (YSYYK), Lys-69, and Tyr-88. 3 disordered regions span residues 150–175 (GAVS…PRDL), 195–226 (EQRA…QCSA), and 248–269 (VALP…SAAN). The span at 156–167 (PCLPKEPAPPSP) shows a compositional bias: pro residues. A phosphoserine mark is found at Ser-166 and Ser-171.

In terms of biological role, binds medium- and long-chain acyl-CoA esters and may function as an intracellular carrier of acyl-CoA esters. The protein is Acyl-CoA-binding domain-containing protein 4 (ACBD4) of Pongo abelii (Sumatran orangutan).